The sequence spans 2415 residues: Spectrin alpha chain (2415 aa).

Spectrin repeat units lie at residues 48–150 (RFQY…KLQQ), 154–254 (LVQF…QEKL), 258–362 (HEIQ…KLDE), 366–464 (LHRF…DRRI), 471–574 (DLQL…LLED), 577–679 (RYQQ…KLNE), 683–784 (QQQF…QHLL), 788–890 (QVQQ…QDLD), and 894–963 (QAHQ…RQQE). Residues 970–1029 (TGKECVVALYDYTEKSPREVSMKKGDVLTLLNSNNKDWWKVEVNDRQGFVPAAYIKKIDA) form the SH3 domain. Phosphoserine occurs at positions 1032 and 1034. 11 Spectrin repeats span residues 1079–1177 (VREA…ASQL), 1181–1284 (HEVQ…EKLL), 1287–1391 (YDLQ…QLEQ), 1394–1496 (DLQL…SRLG), 1500–1604 (TLQQ…KLKE), 1608–1710 (QRTY…RLNE), 1714–1816 (LHQF…KLDE), 1820–1921 (YQQF…GALL), 1926–2028 (YLQF…DRLL), 2040–2141 (LYLT…DGEL), and 2154–2252 (LRKE…NLEQ). EF-hand domains lie at 2265-2300 (DSLK…LGYD) and 2308-2343 (QPDP…KETE). Ca(2+) contacts are provided by D2278, D2280, S2282, K2284, E2289, D2321, N2323, D2325, Y2327, and E2332.

The protein belongs to the spectrin family. In terms of assembly, native spectrin molecule is a tetramer composed of two antiparallel heterodimers joined head to head so that each end of the native molecule includes the C-terminus of the alpha subunit and the N-terminus of the beta subunit. Interacts with calmodulin in a calcium-dependent manner, interacts with F-actin and also interacts with Lva. Interacts with Ten-m. In terms of tissue distribution, a substantial pool of maternal protein in the egg undergoes dynamic changes in distribution early in embryogenesis. In gastrulated embryo, the highest level of protein is found in the respiratory tract cells and the lowest in parts of the forming gut.

It is found in the cytoplasm. The protein resides in the cytoskeleton. Its subcellular location is the golgi apparatus. The protein localises to the cell projection. It localises to the cilium. It is found in the flagellum. Its function is as follows. Spectrin is the major constituent of the cytoskeletal network underlying the erythrocyte plasma membrane. It associates with band 4.1 and actin to form the cytoskeletal superstructure of the erythrocyte plasma membrane. Essential for larval survival and development. Stabilizes cell to cell interactions that are critical for the maintenance of cell shape and subcellular organization within embryonic tissues. Lva and spectrin may form a Golgi-based scaffold that mediates interaction of Golgi bodies with microtubules and facilitates Golgi-derived membrane secretion required for the formation of furrows during cellularization. This chain is Spectrin alpha chain (alpha-Spec), found in Drosophila melanogaster (Fruit fly).